Consider the following 880-residue polypeptide: MKAMETQRNCRTLSLKEIILCTLVLGIIGIIKCEDNMWVTVYYGVPVWREADTTLFCASDAKAQNPEVHNVWASQACVSTNPNPEEIELTNVTEYFNAWENNMVEQMHEDIVNLWDQSVKPCVKLIPLCVTLNCSLFKCIKENGNTTNCTVQISTGNDSTANNITVGTIDMYNCSFNATTELRDRKKQVYSLFYRQDLEPLEGNKPPEGDKNALYRLYNCNTTAMTQACSKVSLEPIPIHYCAPAGFALLKCNDKNFTGIGQCKNVSTVHCTHGIRPVVSTQFLLNGTLEEKVTVLDRNVSNDMDTIIVKLNETVRLNCTRTGNNTIKGIPIGPSQIFYGIETVIGDTRQAFCQLNKTVWTNTFKKVRHALNETYKGYLGNETITFGPSTGGDLEVTNLHLICGGEFFYCNTSILFNTSIIFNETKDDNITIPCRIRQIVRLWQRVGRGIFLPPIRGTINCISNITGILFAQQKTDRMNKSAMFTPVGGEMRNNWRSELYKYKVVRIEPLGVAPTKAKRRTVHREKRAAVGLGALFLGFLGAAGSTMGAASLTLTVQARQLLSGIVQQQSNLLRAIEAQQHLLQLSVWGIKQLQARVLAVERYLKDQQLLGLWGCSGKLICTTSVPWNTTWTNKSYDDIWYNMTWMQWDKEVSNYTDVIYNLLEKAQTQQENNEKELLELDKWASLWNWFDITSWLWYIKIFIIIVGGLIGLRIVFALLSIVNRVRQGYSPLSFQTLIPARRDRDRPEEIEEGGGEPDNVRSIRLVSGFLALAWNDLRDLCLFLYHRLRDLLLIVLRTLELVGQTLLKGLRRGREALIHLRGILQYWGQELKTSAISLLDTTAIAVAEGTDRIIEIAQRFGRGILNIPRRIRQGLERALL.

The first 35 residues, 1 to 35 (MKAMETQRNCRTLSLKEIILCTLVLGIIGIIKCED), serve as a signal peptide directing secretion. Over 36–701 (NMWVTVYYGV…ITSWLWYIKI (666 aa)) the chain is Extracellular. C57 and C77 form a disulfide bridge. N-linked (GlcNAc...) asparagine; by host glycosylation is found at N91, N133, N145, N148, N157, N163, N173, N177, N221, N256, N265, N286, N299, N312, N318, N324, N356, N372, and N381. 5 disulfide bridges follow: C122/C229, C129/C220, C134/C174, C242/C271, and C252/C263. A V1 region spans residues 134–173 (CSLFKCIKENGNTTNCTVQISTGNDSTANNITVGTIDMYN). Positions 174 to 220 (CSFNATTELRDRKKQVYSLFYRQDLEPLEGNKPPEGDKNALYRLYNC) are V2. Residues 319–352 (CTRTGNNTIKGIPIGPSQIFYGIETVIGDTRQAF) form a V3 region. A disulfide bond links C319 and C353. A CD4-binding loop region spans residues 389–399 (STGGDLEVTNL). 2 cysteine pairs are disulfide-bonded: C403–C461 and C410–C434. Positions 410–434 (CNTSILFNTSIIFNETKDDNITIPC) are V4. 6 N-linked (GlcNAc...) asparagine; by host glycosylation sites follow: N411, N417, N423, N429, N464, and N479. A V5 region spans residues 479-487 (NKSAMFTPV). Residues 528–549 (AAVGLGALFLGFLGAAGSTMGA) form a fusion peptide region. Positions 591–609 (KQLQARVLAVERYLKDQQL) are immunosuppression. C615 and C621 are disulfide-bonded. N628, N633, N642, and N654 each carry an N-linked (GlcNAc...) asparagine; by host glycan. Residues 650 to 684 (KEVSNYTDVIYNLLEKAQTQQENNEKELLELDKWA) adopt a coiled-coil conformation. The MPER; binding to GalCer stretch occupies residues 679–700 (ELDKWASLWNWFDITSWLWYIK). The helical transmembrane segment at 702 to 722 (FIIIVGGLIGLRIVFALLSIV) threads the bilayer. The Cytoplasmic segment spans residues 723-880 (NRVRQGYSPL…IRQGLERALL (158 aa)). The YXXL motif; contains endocytosis signal signature appears at 729–732 (YSPL). The S-palmitoyl cysteine; by host moiety is linked to residue C781. The Di-leucine internalization motif signature appears at 879-880 (LL).

This sequence belongs to the HIV-1 env protein family. As to quaternary structure, the mature envelope protein (Env) consists of a homotrimer of non-covalently associated gp120-gp41 heterodimers. The resulting complex protrudes from the virus surface as a spike. There seems to be as few as 10 spikes on the average virion. Interacts with host CD4, CCR5 and CXCR4. Gp120 also interacts with the C-type lectins CD209/DC-SIGN and CLEC4M/DC-SIGNR (collectively referred to as DC-SIGN(R)). Gp120 and gp41 interact with GalCer. Gp120 interacts with host ITGA4/ITGB7 complex; on CD4+ T-cells, this interaction results in rapid activation of integrin ITGAL/LFA-1, which facilitates efficient cell-to-cell spreading of HIV-1. Gp120 interacts with cell-associated heparan sulfate; this interaction increases virus infectivity on permissive cells and may be involved in infection of CD4- cells. The mature envelope protein (Env) consists of a homotrimer of non-covalently associated gp120-gp41 heterodimers. The resulting complex protrudes from the virus surface as a spike. There seems to be as few as 10 spikes on the average virion. Highly glycosylated by host. The high number of glycan on the protein is reffered to as 'glycan shield' because it contributes to hide protein sequence from adaptive immune system. Post-translationally, palmitoylation of the transmembrane protein and of Env polyprotein (prior to its proteolytic cleavage) is essential for their association with host cell membrane lipid rafts. Palmitoylation is therefore required for envelope trafficking to classical lipid rafts, but not for viral replication. In terms of processing, specific enzymatic cleavages in vivo yield mature proteins. Envelope glycoproteins are synthesized as an inactive precursor that is heavily N-glycosylated and processed likely by host cell furin in the Golgi to yield the mature SU and TM proteins. The cleavage site between SU and TM requires the minimal sequence [KR]-X-[KR]-R. About 2 of the 9 disulfide bonds of gp41 are reduced by P4HB/PDI, following binding to CD4 receptor.

It localises to the virion membrane. Its subcellular location is the host cell membrane. It is found in the host endosome membrane. In terms of biological role, attaches the virus to the host lymphoid cell by binding to the primary receptor CD4. This interaction induces a structural rearrangement creating a high affinity binding site for a chemokine coreceptor like CXCR4 and/or CCR5. Acts as a ligand for CD209/DC-SIGN and CLEC4M/DC-SIGNR, which are respectively found on dendritic cells (DCs), and on endothelial cells of liver sinusoids and lymph node sinuses. These interactions allow capture of viral particles at mucosal surfaces by these cells and subsequent transmission to permissive cells. HIV subverts the migration properties of dendritic cells to gain access to CD4+ T-cells in lymph nodes. Virus transmission to permissive T-cells occurs either in trans (without DCs infection, through viral capture and transmission), or in cis (following DCs productive infection, through the usual CD4-gp120 interaction), thereby inducing a robust infection. In trans infection, bound virions remain infectious over days and it is proposed that they are not degraded, but protected in non-lysosomal acidic organelles within the DCs close to the cell membrane thus contributing to the viral infectious potential during DCs' migration from the periphery to the lymphoid tissues. On arrival at lymphoid tissues, intact virions recycle back to DCs' cell surface allowing virus transmission to CD4+ T-cells. Functionally, acts as a class I viral fusion protein. Under the current model, the protein has at least 3 conformational states: pre-fusion native state, pre-hairpin intermediate state, and post-fusion hairpin state. During fusion of viral and target intracellular membranes, the coiled coil regions (heptad repeats) assume a trimer-of-hairpins structure, positioning the fusion peptide in close proximity to the C-terminal region of the ectodomain. The formation of this structure appears to drive apposition and subsequent fusion of viral and target cell membranes. Complete fusion occurs in host cell endosomes and is dynamin-dependent, however some lipid transfer might occur at the plasma membrane. The virus undergoes clathrin-dependent internalization long before endosomal fusion, thus minimizing the surface exposure of conserved viral epitopes during fusion and reducing the efficacy of inhibitors targeting these epitopes. Membranes fusion leads to delivery of the nucleocapsid into the cytoplasm. Oligomerizes in the host endoplasmic reticulum into predominantly trimers. In a second time, gp160 transits in the host Golgi, where glycosylation is completed. The precursor is then proteolytically cleaved in the trans-Golgi and thereby activated by cellular furin or furin-like proteases to produce gp120 and gp41. The polypeptide is Envelope glycoprotein gp160 (Pan troglodytes (Chimpanzee)).